The following is a 525-amino-acid chain: Probable lipid II flippase MurJ (525 aa).

Helical transmembrane passes span 10–30 (LLKSGIIVSAMTLISRVLGLV), 32–52 (DVVVANLMGAGASADVFFFAN), 100–120 (VLVTIVTLIGVLGSGAVTALF), 140–160 (LASLLLKITFPYLWFITFVAL), 171–191 (FAVSSFTPVFLNVMMILCAWY), 203–223 (LAIGVFLGGLVQFLFQLPFLI), 247–267 (MIPALFGVSVSQINLLFDSFV), 285–305 (LLEFPLGLFGIAIATVILPAL), 330–350 (FLGIPAMLGLMVLAKPMLMVL), 368–388 (LLAYSSGLLSFMLIKVLAPGY), 402–422 (IIAMVSNIVLNAIFAWFYGYV), 423–443 (GLAVATSMSAFLNMALLYRGL), 455–475 (TVWFVARLAMAGAVMTGALLW), and 495–515 (LTGLIGLGVASYLAILLLLGV).

Belongs to the MurJ/MviN family.

It localises to the cell inner membrane. It participates in cell wall biogenesis; peptidoglycan biosynthesis. Its function is as follows. Involved in peptidoglycan biosynthesis. Transports lipid-linked peptidoglycan precursors from the inner to the outer leaflet of the cytoplasmic membrane. The chain is Probable lipid II flippase MurJ from Vibrio cholerae serotype O1 (strain ATCC 39315 / El Tor Inaba N16961).